A 131-amino-acid chain; its full sequence is uncharacterized protein (131 aa).

The tract at residues 13–32 is disordered; that stretch reads TYSPLPEPPPTPALGGQRGP.

This is an uncharacterized protein from Homo sapiens (Human).